A 163-amino-acid chain; its full sequence is Small heat shock protein C1 (163 aa).

Residues 55–163 (TFYESSSLKS…EQDSREITIN (109 aa)) enclose the sHSP domain.

It belongs to the small heat shock protein (HSP20) family.

The polypeptide is Small heat shock protein C1 (hspC1) (Rickettsia prowazekii (strain Madrid E)).